We begin with the raw amino-acid sequence, 773 residues long: 3-isopropylmalate dehydratase (773 aa).

3 residues coordinate [4Fe-4S] cluster: Cys-355, Cys-415, and Cys-418.

Belongs to the aconitase/IPM isomerase family. As to quaternary structure, monomer. [4Fe-4S] cluster serves as cofactor.

The catalysed reaction is (2R,3S)-3-isopropylmalate = (2S)-2-isopropylmalate. The protein operates within amino-acid biosynthesis; L-leucine biosynthesis; L-leucine from 3-methyl-2-oxobutanoate: step 2/4. Catalyzes the isomerization between 2-isopropylmalate and 3-isopropylmalate, via the formation of 2-isopropylmaleate. In Mycosarcoma maydis (Corn smut fungus), this protein is 3-isopropylmalate dehydratase (LEU1).